An 87-amino-acid polypeptide reads, in one-letter code: Putative regulatory protein GTNG_1019 (87 aa).

This sequence belongs to the RemA family.

In Geobacillus thermodenitrificans (strain NG80-2), this protein is Putative regulatory protein GTNG_1019.